Reading from the N-terminus, the 278-residue chain is Pantothenate synthetase (278 aa).

27 to 34 (MGYLHEGH) contacts ATP. The active-site Proton donor is histidine 34. Glutamine 58 contributes to the (R)-pantoate binding site. Glutamine 58 provides a ligand contact to beta-alanine. 144–147 (GQKD) contributes to the ATP binding site. Residue glutamine 150 participates in (R)-pantoate binding. Residues valine 173 and 181–184 (MSSR) each bind ATP.

It belongs to the pantothenate synthetase family. As to quaternary structure, homodimer.

It is found in the cytoplasm. It catalyses the reaction (R)-pantoate + beta-alanine + ATP = (R)-pantothenate + AMP + diphosphate + H(+). It participates in cofactor biosynthesis; (R)-pantothenate biosynthesis; (R)-pantothenate from (R)-pantoate and beta-alanine: step 1/1. Its function is as follows. Catalyzes the condensation of pantoate with beta-alanine in an ATP-dependent reaction via a pantoyl-adenylate intermediate. This chain is Pantothenate synthetase, found in Roseiflexus castenholzii (strain DSM 13941 / HLO8).